Here is a 93-residue protein sequence, read N- to C-terminus: Large ribosomal subunit protein uL23 (93 aa).

Belongs to the universal ribosomal protein uL23 family. As to quaternary structure, part of the 50S ribosomal subunit. Contacts protein L29, and trigger factor when it is bound to the ribosome.

In terms of biological role, one of the early assembly proteins it binds 23S rRNA. One of the proteins that surrounds the polypeptide exit tunnel on the outside of the ribosome. Forms the main docking site for trigger factor binding to the ribosome. This Natranaerobius thermophilus (strain ATCC BAA-1301 / DSM 18059 / JW/NM-WN-LF) protein is Large ribosomal subunit protein uL23.